The following is a 163-amino-acid chain: Disulfide bond formation protein B (163 aa).

At 1 to 9 (MRLASPRSL) the chain is on the cytoplasmic side. A helical transmembrane segment spans residues 10-26 (FVIAFLGSALLIAIALY). The Periplasmic segment spans residues 27–44 (MEHVMGLAPCPLCIVQRI). A disulfide bond links Cys-36 and Cys-39. Residues 45–61 (CVIGFGLVCLVAAIHGP) form a helical membrane-spanning segment. At 62–67 (AKVGRR) the chain is on the cytoplasmic side. A helical membrane pass occupies residues 68 to 85 (VYAAIAALFVAAGAATAI). Over 86-142 (RQIWLQSVPADQLPSCLPSLEYMMEALPFQEIARLVLHGTAECAEVSWTMLGMSIPE) the chain is Periplasmic. Cys-101 and Cys-128 are joined by a disulfide. The helical transmembrane segment at 143 to 161 (WSLLGFIGMAIVCLWQLLR) threads the bilayer. Residues 162-163 (RD) are Cytoplasmic-facing.

The protein belongs to the DsbB family.

Its subcellular location is the cell inner membrane. Required for disulfide bond formation in some periplasmic proteins. Acts by oxidizing the DsbA protein. This Stutzerimonas stutzeri (strain A1501) (Pseudomonas stutzeri) protein is Disulfide bond formation protein B.